The following is a 2383-amino-acid chain: Reducing polyketide synthase rdc5 (2383 aa).

In terms of domain architecture, Ketosynthase family 3 (KS3) spans 10–438 (RAPIAIIGMS…GTNAHLVLER (429 aa)). Active-site for beta-ketoacyl synthase activity residues include Cys186, His321, and His361. Residues 550–881 (FVFTGQGAQW…GFAAELFRRG (332 aa)) are malonyl-CoA:ACP transacylase (MAT) domain. The interval 930–1066 (KSLIGAERPS…GLFSINYEDS (137 aa)) is N-terminal hotdog fold. Positions 930-1253 (KSLIGAERPS…LAELEVEDAD (324 aa)) constitute a PKS/mFAS DH domain. The interval 932-1250 (LIGAERPSLD…DFHLAELEVE (319 aa)) is dehydratase (DH) domain. The Proton acceptor; for dehydratase activity role is filled by His962. The segment at 1094-1253 (VEVISKQAFY…LAELEVEDAD (160 aa)) is C-terminal hotdog fold. The active-site Proton donor; for dehydratase activity is the Asp1160. The tract at residues 1663 to 1977 (GLLNTLHFVS…QGKHVGKMIL (315 aa)) is enoyl reductase (ER) domain. Cys1776 functions as the Phosphocysteine intermediate in the catalytic mechanism. The ketoreductase (KR) domain stretch occupies residues 2002–2182 (ATYLFIGGLG…VSVNLGIMRD (181 aa)). The Carrier domain maps to 2300-2377 (AAGPIITKAL…QFAVQIAKKS (78 aa)). Residue Ser2337 is modified to O-(pantetheine 4'-phosphoryl)serine.

Its pathway is secondary metabolite biosynthesis. In terms of biological role, reducing polyketide synthase; part of the gene cluster that mediates the biosynthesis of radicicol, a resorcylic acid lactone (RAL) that irreversibly inhibits the HSP90 molecular chaperone, an important target for cancer chemotherapy. The radicicol cluster encodes only two apparent post-PKS enzymes, a cytochrome P450 monooxygenase (rdc4) and a non-heme halogenase (rdc2) that could introduce the epoxide and the chlorine, respectively. If this cluster includes all the genes required for radicicol biosynthesis, the remaining structural features of radicicol are presumably generated by the PKSs rdc1 and rdc5. The C-2' ketone could arise if the R-PKS rdc5 and NR-PKS rdc1 each carry out four iterations, in contrast to the five iteration-three iteration split for the hypothemycin PKSs. The origin of the cis 5',6' double bond is not known. The radicicol R-PKS rdc5 ER domain may catalyze either double bond isomerization or reduction in the third iteration. In Metacordyceps chlamydosporia (Nematophagous fungus), this protein is Reducing polyketide synthase rdc5.